The chain runs to 354 residues: NADH-ubiquinone oxidoreductase chain 1 (354 aa).

The next 8 membrane-spanning stretches (helical) occupy residues 43 to 63 (LFWSLSFYVVVLLSVAYLTLF), 108 to 128 (PALFFLGPCFMLLHSFILWGC), 139 to 159 (FFWGGLYVLSVLSVGVYGVVL), 180 to 200 (VISYEVMLVFLYLCPFFVVGS), 211 to 231 (VSGCNGGVLFLVLPWWVFCVL), 264 to 284 (IFIAEYSNILFLSTLTSVLFL), 298 to 318 (LISSSVIGSFFSFMVVFLIVL), and 334 to 354 (LIWCQILPILMSCFALFLMII).

This sequence belongs to the complex I subunit 1 family.

It localises to the mitochondrion inner membrane. The catalysed reaction is a ubiquinone + NADH + 5 H(+)(in) = a ubiquinol + NAD(+) + 4 H(+)(out). In terms of biological role, core subunit of the mitochondrial membrane respiratory chain NADH dehydrogenase (Complex I) that is believed to belong to the minimal assembly required for catalysis. Complex I functions in the transfer of electrons from NADH to the respiratory chain. The immediate electron acceptor for the enzyme is believed to be ubiquinone. The chain is NADH-ubiquinone oxidoreductase chain 1 (ND1) from Pecten maximus (King scallop).